The chain runs to 394 residues: Putative FNIP repeat-containing protein R636 (394 aa).

FNIP repeat units lie at residues 126 to 167 (FNKS…FSVY), 168 to 207 (FDQPVVGYLPTRLTHLIFGTDFNQPIKGALPDTLEYLYFG), and 210 to 250 (FNQP…IFEA).

This Acanthamoeba polyphaga mimivirus (APMV) protein is Putative FNIP repeat-containing protein R636.